We begin with the raw amino-acid sequence, 323 residues long: Serine racemase (323 aa).

ATP contacts are provided by Ser32, Ser33, and Lys52. The active-site Proton acceptor is the Lys57. Position 57 is a lysino-D-alanine (Lys); alternate (Lys57). The residue at position 57 (Lys57) is an N6-(pyridoxal phosphate)lysine; alternate. Ca(2+) is bound at residue Thr79. Ser82 serves as the catalytic Proton acceptor. Pyridoxal 5'-phosphate is bound at residue Asn84. ATP contacts are provided by Gln87 and Tyr119. Asp176 lines the Mg(2+) pocket. Positions 183, 184, 185, 186, and 187 each coordinate pyridoxal 5'-phosphate. Residues Glu208, Gly212, and Asp214 each coordinate Ca(2+). Mg(2+)-binding residues include Glu208, Gly212, and Asp214. The Mn(2+) site is built by Glu208, Gly212, and Asp214. Lys277 contributes to the ATP binding site. Residue Ser308 coordinates pyridoxal 5'-phosphate. Asn311 serves as a coordination point for ATP.

The protein belongs to the serine/threonine dehydratase family. Homodimer. It depends on Mg(2+) as a cofactor. Mn(2+) is required as a cofactor. Ca(2+) serves as cofactor. Requires pyridoxal 5'-phosphate as cofactor. In terms of processing, modification of the active site Lys by its substrate Ser to lysino-D-alanine reduces but does not abolish enzyme activity.

The enzyme catalyses L-serine = D-serine. The catalysed reaction is L-serine = pyruvate + NH4(+). It catalyses the reaction D-serine = pyruvate + NH4(+). Its activity is regulated as follows. Allosterically activated by ATP, by magnesium, and possibly also by other divalent metal cations. In terms of biological role, catalyzes the synthesis of D-serine from L-serine. Has dehydratase activity towards both L-serine and D-serine. The sequence is that of Serine racemase from Schizosaccharomyces pombe (strain 972 / ATCC 24843) (Fission yeast).